Consider the following 360-residue polypeptide: tRNA-specific 2-thiouridylase MnmA (360 aa).

ATP contacts are provided by residues Ala-9–Ser-16 and Leu-35. Residue Cys-104 is the Nucleophile of the active site. An intrachain disulfide couples Cys-104 to Cys-197. Gly-128 contacts ATP. Positions Lys-147–Gln-149 are interaction with tRNA. Cys-197 functions as the Cysteine persulfide intermediate in the catalytic mechanism.

The protein belongs to the MnmA/TRMU family.

It localises to the cytoplasm. It carries out the reaction S-sulfanyl-L-cysteinyl-[protein] + uridine(34) in tRNA + AH2 + ATP = 2-thiouridine(34) in tRNA + L-cysteinyl-[protein] + A + AMP + diphosphate + H(+). Catalyzes the 2-thiolation of uridine at the wobble position (U34) of tRNA, leading to the formation of s(2)U34. In Salinispora arenicola (strain CNS-205), this protein is tRNA-specific 2-thiouridylase MnmA.